The chain runs to 763 residues: G protein-regulated inducer of neurite outgrowth 3 (763 aa).

Disordered stretches follow at residues 1 to 48 (MGTV…IGNV), 65 to 111 (QACV…APGL), and 192 to 268 (ENSQ…GATC). Residues 27-44 (ESQSVSPQPAQPDNNASG) show a composition bias toward polar residues. Over residues 93–104 (KTPDDFLLHGSK) the composition is skewed to basic and acidic residues. Polar residues predominate over residues 237–250 (ENKQPSATALNTTA). 2 positions are modified to phosphoserine: Ser-323 and Ser-359. 3 disordered regions span residues 420-452 (TSSQNTETEEDLRLSASKEATSRQPEGTNPDFQ), 471-624 (NQGL…PRRG), and 711-737 (VKTQSGQTRRSISSDSSSSKKLKGRQH). Polar residues predominate over residues 437–450 (KEATSRQPEGTNPD). Composition is skewed to basic and acidic residues over residues 480–496 (REPEIVVKTAKDHKAES) and 518–539 (PTDKKGAKDKKPASPLIVKDHA). The span at 593-609 (SLSLPSDGTGDSSPGSG) shows a compositional bias: low complexity.

In terms of biological role, may be involved in neurite outgrowth. This is G protein-regulated inducer of neurite outgrowth 3 (Gprin3) from Mus musculus (Mouse).